Reading from the N-terminus, the 364-residue chain is Protein MGF 360-1L (364 aa).

The protein belongs to the asfivirus MGF 360 family.

Plays a role in virus cell tropism, and may be required for efficient virus replication in macrophages. The protein is Protein MGF 360-1L of Ornithodoros (relapsing fever ticks).